The primary structure comprises 190 residues: Large ribosomal subunit protein uL10 (190 aa).

This sequence belongs to the universal ribosomal protein uL10 family. In terms of assembly, part of the ribosomal stalk of the 50S ribosomal subunit. The N-terminus interacts with L11 and the large rRNA to form the base of the stalk. The C-terminus forms an elongated spine to which L12 dimers bind in a sequential fashion forming a multimeric L10(L12)X complex.

Forms part of the ribosomal stalk, playing a central role in the interaction of the ribosome with GTP-bound translation factors. This chain is Large ribosomal subunit protein uL10, found in Trichodesmium erythraeum (strain IMS101).